A 110-amino-acid chain; its full sequence is Protein YcgL (110 aa).

The 85-residue stretch at Met-14 to Leu-98 folds into the YcgL domain.

This Salmonella arizonae (strain ATCC BAA-731 / CDC346-86 / RSK2980) protein is Protein YcgL.